The chain runs to 152 residues: MKCPACQHNGTRVLDSRPVDEGRSIRRRRECESCNYRFTTFEKVEEIPLIVVKKEGIREEFSREKMLRGLIKACEKRPVALKQLEDICFEIEKELRNQGVSEVKSDMIGEMVMDRLAKIDEVAYVRFASVYRQFKDINVFIDELKDLIKKER.

A zinc finger lies at 3-34 (CPACQHNGTRVLDSRPVDEGRSIRRRRECESC). The ATP-cone domain occupies 49-139 (LIVVKKEGIR…VYRQFKDINV (91 aa)).

This sequence belongs to the NrdR family. Zn(2+) is required as a cofactor.

In terms of biological role, negatively regulates transcription of bacterial ribonucleotide reductase nrd genes and operons by binding to NrdR-boxes. This chain is Transcriptional repressor NrdR, found in Bacillus licheniformis (strain ATCC 14580 / DSM 13 / JCM 2505 / CCUG 7422 / NBRC 12200 / NCIMB 9375 / NCTC 10341 / NRRL NRS-1264 / Gibson 46).